The chain runs to 530 residues: Ubiquitin carboxyl-terminal hydrolase 17-like protein 13 (530 aa).

Residues Ala-80 to Lys-375 enclose the USP domain. The active-site Nucleophile is Cys-89. His-334 serves as the catalytic Proton acceptor. Composition is skewed to basic and acidic residues over residues Ser-382–Arg-392 and Asp-398–His-412. 2 disordered regions span residues Ser-382 to His-412 and Asn-477 to Gln-530. Positions Thr-493–Leu-505 are enriched in polar residues. A compositionally biased stretch (basic residues) spans Gly-510–Arg-524.

This sequence belongs to the peptidase C19 family. USP17 subfamily.

The protein localises to the nucleus. Its subcellular location is the endoplasmic reticulum. The enzyme catalyses Thiol-dependent hydrolysis of ester, thioester, amide, peptide and isopeptide bonds formed by the C-terminal Gly of ubiquitin (a 76-residue protein attached to proteins as an intracellular targeting signal).. Its function is as follows. Deubiquitinating enzyme that removes conjugated ubiquitin from specific proteins to regulate different cellular processes that may include cell proliferation, progression through the cell cycle, apoptosis, cell migration, and the cellular response to viral infection. The chain is Ubiquitin carboxyl-terminal hydrolase 17-like protein 13 (USP17L13) from Homo sapiens (Human).